We begin with the raw amino-acid sequence, 500 residues long: Putative beta-glucosidase 5 (500 aa).

The signal sequence occupies residues 1–20; the sequence is MEQFFALFTIFLSFAFPGRC. A beta-D-glucoside contacts are provided by residues Q43, H140, and 185–186; that span reads NE. E186 acts as the Proton donor in catalysis. An intrachain disulfide couples C205 to C212. N-linked (GlcNAc...) asparagine glycosylation occurs at N216. An a beta-D-glucoside-binding site is contributed by Y328. Residue N361 is glycosylated (N-linked (GlcNAc...) asparagine). A beta-D-glucoside is bound at residue E394. The active-site Nucleophile is E394. N424 is a glycosylation site (N-linked (GlcNAc...) asparagine). Residues W434 and Y450 each coordinate a beta-D-glucoside. Residues N456 and N495 are each glycosylated (N-linked (GlcNAc...) asparagine).

It belongs to the glycosyl hydrolase 1 family.

The catalysed reaction is Hydrolysis of terminal, non-reducing beta-D-glucosyl residues with release of beta-D-glucose.. This is Putative beta-glucosidase 5 from Arabidopsis thaliana (Mouse-ear cress).